The sequence spans 398 residues: DNA replication and repair protein RecF (398 aa).

An ATP-binding site is contributed by 30-37 (GRNGFGKT).

This sequence belongs to the RecF family.

Its subcellular location is the cytoplasm. Its function is as follows. The RecF protein is involved in DNA metabolism; it is required for DNA replication and normal SOS inducibility. RecF binds preferentially to single-stranded, linear DNA. It also seems to bind ATP. This chain is DNA replication and repair protein RecF, found in Corynebacterium efficiens (strain DSM 44549 / YS-314 / AJ 12310 / JCM 11189 / NBRC 100395).